We begin with the raw amino-acid sequence, 702 residues long: Elongation factor G (702 aa).

Residues 8–290 form the tr-type G domain; the sequence is ERYRNIGISA…GVVEYLPSPV (283 aa). GTP-binding positions include 17–24, 88–92, and 142–145; these read AHIDAGKT, DTPGH, and NKMD.

Belongs to the TRAFAC class translation factor GTPase superfamily. Classic translation factor GTPase family. EF-G/EF-2 subfamily.

It localises to the cytoplasm. In terms of biological role, catalyzes the GTP-dependent ribosomal translocation step during translation elongation. During this step, the ribosome changes from the pre-translocational (PRE) to the post-translocational (POST) state as the newly formed A-site-bound peptidyl-tRNA and P-site-bound deacylated tRNA move to the P and E sites, respectively. Catalyzes the coordinated movement of the two tRNA molecules, the mRNA and conformational changes in the ribosome. The protein is Elongation factor G of Janthinobacterium sp. (strain Marseille) (Minibacterium massiliensis).